Here is a 179-residue protein sequence, read N- to C-terminus: Cell division protein ZapC (179 aa).

This sequence belongs to the ZapC family. In terms of assembly, interacts directly with FtsZ.

The protein resides in the cytoplasm. In terms of biological role, contributes to the efficiency of the cell division process by stabilizing the polymeric form of the cell division protein FtsZ. Acts by promoting interactions between FtsZ protofilaments and suppressing the GTPase activity of FtsZ. This is Cell division protein ZapC from Tolumonas auensis (strain DSM 9187 / NBRC 110442 / TA 4).